Reading from the N-terminus, the 458-residue chain is UDP-N-acetylmuramate--L-alanine ligase (458 aa).

Residue 118 to 124 (GTHGKTT) coordinates ATP.

The protein belongs to the MurCDEF family.

The protein localises to the cytoplasm. It carries out the reaction UDP-N-acetyl-alpha-D-muramate + L-alanine + ATP = UDP-N-acetyl-alpha-D-muramoyl-L-alanine + ADP + phosphate + H(+). It participates in cell wall biogenesis; peptidoglycan biosynthesis. Its function is as follows. Cell wall formation. In Clostridium novyi (strain NT), this protein is UDP-N-acetylmuramate--L-alanine ligase.